The chain runs to 318 residues: MWLPLLLGALLWAVLWLLRDRQSLPASDAFIFITGCDSGFGRLLALQLDQKGFQVLAGCLTPSGAEDLQQMASSRLHTTLLDITDPQNVQQVAKWVKTRVGETGLFGLVNNAGVAGIIGPTPWLTQDDFQRVLSVNTLGPIGVTLALLPLLQQARGRVVNITSVLGRIAANGGGYCVSKFGLEAFSDSLRRDMAPFGVQVSIVEPGFFRTPVTNLESLESTLKACWARLPPAIQAHYGEAFLDTYLRVQRRIMNLICDPELTKVTSCLEHALTARHPRTRYSPGWDAKLLWLPASYLPARVVDAVLTWILPRPAQSVS.

The chain crosses the membrane as a helical span at residues 1 to 23; that stretch reads MWLPLLLGALLWAVLWLLRDRQS. The Lumenal portion of the chain corresponds to 24–288; sequence LPASDAFIFI…TRYSPGWDAK (265 aa). NADP(+) is bound at residue 32–56; the sequence is FITGCDSGFGRLLALQLDQKGFQVL. Substrate is bound at residue serine 163. Tyrosine 175 acts as the Proton acceptor in catalysis. The chain crosses the membrane as a helical span at residues 289 to 309; the sequence is LLWLPASYLPARVVDAVLTWI. Residues 310-318 lie on the Cytoplasmic side of the membrane; sequence LPRPAQSVS.

This sequence belongs to the short-chain dehydrogenases/reductases (SDR) family. As to quaternary structure, homodimer. Expressed in eye, liver, kidney, brain, intestine, placenta, epididymus and submaxillary gland. In eye, strongly expressed in the retinal pigment epithelium, with lower expression levels detected in the inner segment of the photoreceptor cells and in the outer plexiform layer. In kidney, strong expression detected in the distal tubules and the transitional epithelium in the renal pelvis, with weaker expression detected in the epithelium of the outer stripe of the outer zone of the medulla. In liver, detected in hepatocytes in the centrilobular area. In lung, present in club cells in the epithelium of the bronchiole, in parenchyma and in cartilage surrounding the secondary bronchi. In skin, expressed in epidermis, hair follicles and mast cells in the dermis. Expressed in heart. Not detected in heart. Not detected in lung, spleen, skeletal muscle and testis.

It localises to the endoplasmic reticulum membrane. It carries out the reaction 11-cis-retinol + NAD(+) = 11-cis-retinal + NADH + H(+). The enzyme catalyses 9-cis-retinol + NAD(+) = 9-cis-retinal + NADH + H(+). The catalysed reaction is 13-cis-retinol + NAD(+) = 13-cis-retinal + NADH + H(+). It catalyses the reaction androsterone + NAD(+) = 5alpha-androstan-3,17-dione + NADH + H(+). It carries out the reaction 5alpha-androstane-3alpha,17beta-diol + NAD(+) = 17beta-hydroxy-5alpha-androstan-3-one + NADH + H(+). Its pathway is cofactor metabolism; retinol metabolism. Its activity is regulated as follows. Inhibited by 9-cis-, 13-cis- and all-trans-retinoic acids, with the most potent inhibitor being 13-cis-retinoic acid. Weakly inhibited by oleic acid. Functionally, catalyzes the oxidation of cis-isomers of retinol, including 11-cis-, 9-cis-, and 13-cis-retinol in an NAD-dependent manner. Has no activity towards all-trans retinal. Plays a significant role in 11-cis retinol oxidation in the retinal pigment epithelium cells (RPE). Also recognizes steroids (androsterone, androstanediol) as its substrates. This chain is Retinol dehydrogenase 5, found in Mus musculus (Mouse).